Consider the following 143-residue polypeptide: uncharacterized protein (143 aa).

This is an uncharacterized protein from Homo sapiens (Human).